A 216-amino-acid chain; its full sequence is ATP phosphoribosyltransferase (216 aa).

This sequence belongs to the ATP phosphoribosyltransferase family. Short subfamily. As to quaternary structure, heteromultimer composed of HisG and HisZ subunits.

The protein resides in the cytoplasm. It catalyses the reaction 1-(5-phospho-beta-D-ribosyl)-ATP + diphosphate = 5-phospho-alpha-D-ribose 1-diphosphate + ATP. Its pathway is amino-acid biosynthesis; L-histidine biosynthesis; L-histidine from 5-phospho-alpha-D-ribose 1-diphosphate: step 1/9. Catalyzes the condensation of ATP and 5-phosphoribose 1-diphosphate to form N'-(5'-phosphoribosyl)-ATP (PR-ATP). Has a crucial role in the pathway because the rate of histidine biosynthesis seems to be controlled primarily by regulation of HisG enzymatic activity. This chain is ATP phosphoribosyltransferase, found in Synechococcus sp. (strain CC9902).